A 416-amino-acid polypeptide reads, in one-letter code: Tyrosine permease (416 aa).

A run of 11 helical transmembrane segments spans residues 13–33 (GTMLIIATVIGGGMFSLPIAM), 34–54 (AGIWFPGASIILTLIAIMMLL), 86–106 (VVVGIAFGFVLYILTYAYISG), 127–147 (LSVIIVSVLVGGIAWYSSLLV), 153–173 (VLIIGKFVAFFATFSGLIWHV), 192–212 (LPYILMTLPFCIISYGFHGNV), 231–251 (IFIGTAFALLLYIFWLVVTMG), 260–280 (PIIAKGGNIDVFVEAIGGLFT), 286–306 (LILTFFGNFAVASSLLAATLG), 337–357 (VVCFILPGGFVYAIGYAGLAF), and 389–409 (ILNLVIVVGGFVYLTVVLDVF).

It belongs to the amino acid/polyamine transporter 2 family. Mtr/TnaB/TyrP permease subfamily.

The protein resides in the cell inner membrane. The polypeptide is Tyrosine permease (tutB) (Enterobacter agglomerans (Erwinia herbicola)).